The chain runs to 888 residues: Probable disease resistance protein At5g63020 (888 aa).

The stretch at 22 to 66 (LNRNGDYIHGLEENLTALQRALEQIEQRREDLLRKILSEERRGLQ) forms a coiled coil. The region spanning 139–442 (AERVDAARVE…GEGFIDRNKG (304 aa)) is the NB-ARC domain. 181-188 (GMGGVGKT) serves as a coordination point for ATP. 5 LRR repeats span residues 512–533 (VARR…PESP), 534–555 (QLIT…FFRL), 558–580 (MLVV…ISEC), 582–604 (SLQY…VELR), and 605–627 (KLLY…SGLT).

The protein belongs to the disease resistance NB-LRR family.

In terms of biological role, probable disease resistance protein. This chain is Probable disease resistance protein At5g63020, found in Arabidopsis thaliana (Mouse-ear cress).